Consider the following 40-residue polypeptide: Small polypeptide DEVIL 6 (40 aa).

Residues Ser9–Asp40 are required for DVL/RTFL small polypeptide activity. A helical transmembrane segment spans residues Arg12 to Ile28.

It belongs to the DVL/RTFL small polypeptides family.

The protein localises to the cell membrane. Its function is as follows. Small polypeptide acting as a regulatory molecule which coordinates cellular responses required for differentiation, growth and development, probably by restricting polar cell proliferation in lateral organs and coordinating socket cell recruitment and differentiation at trichome sites. This chain is Small polypeptide DEVIL 6, found in Arabidopsis thaliana (Mouse-ear cress).